A 171-amino-acid polypeptide reads, in one-letter code: Auxin-responsive protein IAA33 (171 aa).

2 stretches are compositionally biased toward polar residues: residues 1 to 11 (MNSFEPQSQDS) and 19 to 32 (DNST…TTTP). The interval 1–51 (MNSFEPQSQDSLQRRFHQDNSTTQQPRDTTTPFIPKPASKNHNNSNSSSGA) is disordered. A compositionally biased stretch (low complexity) spans 40-49 (KNHNNSNSSS). Residues 72–162 (VPPVTVVLEG…KRIRILPVKG (91 aa)) enclose the PB1 domain.

Belongs to the Aux/IAA family. As to quaternary structure, homodimers and heterodimers.

It is found in the nucleus. Functionally, aux/IAA proteins are short-lived transcriptional factors that function as repressors of early auxin response genes at low auxin concentrations. Repression is thought to result from the interaction with auxin response factors (ARFs), proteins that bind to the auxin-responsive promoter element (AuxRE). Formation of heterodimers with ARF proteins may alter their ability to modulate early auxin response genes expression. This Arabidopsis thaliana (Mouse-ear cress) protein is Auxin-responsive protein IAA33 (IAA33).